We begin with the raw amino-acid sequence, 163 residues long: Nucleotide-binding protein GTNG_0630 (163 aa).

This sequence belongs to the YajQ family.

Nucleotide-binding protein. The polypeptide is Nucleotide-binding protein GTNG_0630 (Geobacillus thermodenitrificans (strain NG80-2)).